The chain runs to 328 residues: MAKDIRVLLYYLYTPIENAEQFAADHLAFCKSIGLKGRILVADEGINGTVSGDYETTQKYMDYVHSLPGMEDLWFKIDEENEQAFKKMFVRYKKEIVHLGLEDNDFDNDINPLETTGAYLSPKEFKEALLDKDTVVLDTRNDYEYDLGHFRGAIRPDIRNFRELPQWVRDNKEKFMDKRVVVYCTGGVRCEKFSGWMVREGYKDVGQLHGGIATYGKDPEVQGELWDGKMYVFDERIAVDVNHVNPTIVGKDWFDGTPCERYVNCGNPFCNRRILTSEENEDKYLRGCSHECRVHPRNRYVSKNELTQAEVIERLAAIGESLDQAATV.

The region spanning 130–224 is the Rhodanese domain; the sequence is LDKDTVVLDT…YGKDPEVQGE (95 aa). The active-site Cysteine persulfide intermediate is the C184.

It belongs to the TrhO family.

It catalyses the reaction uridine(34) in tRNA + AH2 + O2 = 5-hydroxyuridine(34) in tRNA + A + H2O. Catalyzes oxygen-dependent 5-hydroxyuridine (ho5U) modification at position 34 in tRNAs. The polypeptide is tRNA uridine(34) hydroxylase (Streptococcus pneumoniae (strain Hungary19A-6)).